A 603-amino-acid polypeptide reads, in one-letter code: ABC transporter E family member 1 (603 aa).

4Fe-4S ferredoxin-type domains follow at residues R7–I39 and K46–L75. 2 ABC transporter domains span residues I70–G315 and V344–L566. ATP-binding positions include G110 to S117 and G381 to T388.

The protein belongs to the ABC transporter superfamily. ABCE family. Expressed in roots, stems, leaves, flowers and siliques.

The protein resides in the membrane. This Arabidopsis thaliana (Mouse-ear cress) protein is ABC transporter E family member 1 (ABCE1).